Consider the following 1094-residue polypeptide: Probable serine/threonine-protein kinase kinX (1094 aa).

The Protein kinase domain maps to 22–281 (LDFISEIGSG…QTLKQIKTTL (260 aa)). Residues 28–36 (IGSGGFGKV) and Lys-49 contribute to the ATP site. Asp-146 (proton acceptor) is an active-site residue. Disordered stretches follow at residues 301-884 (TTNG…SVED) and 946-1083 (IKVE…PNNK). Acidic residues predominate over residues 330–344 (YDDDDDDDDDDDDND). Residues 351 to 373 (SDNSNSNVTLESNSNYNSSTING) are compositionally biased toward polar residues. Residues 374 to 387 (QEQQEQQEQQQQQQ) show a composition bias toward low complexity. Over residues 393-408 (DEGEIEQDDDNIEVYD) the composition is skewed to acidic residues. Residues 410-424 (DYQKKLEEHQKELLE) show a composition bias toward basic and acidic residues. Acidic residues-rich tracts occupy residues 433–454 (STDENEVYEQEEEEEEEDEEEQ), 480–496 (DDEDDDDDEEDEEEGDE), and 503–523 (DFDEDDEDDEEYDEDEDDEDE). Composition is skewed to low complexity over residues 526-542 (IQYYQQQLQYQQQLQKQ) and 564-585 (RQLQQQQQQQQQQQQQQQQHQQ). The segment covering 587-602 (YDDDDDDDDEEEEEYD) has biased composition (acidic residues). The span at 603 to 639 (DVIRHDTDSEEESKDKTPLPWDQHFEKQKESENKVEQ) shows a compositional bias: basic and acidic residues. Positions 650–661 (QETEQQQQQQQQ) are enriched in low complexity. Over residues 670–801 (PTKVEDVKVE…EPVEEVKVEE (132 aa)) the composition is skewed to basic and acidic residues. Positions 676–978 (VKVETEEQTK…PVKVEVASPV (303 aa)) are 40 X 9 AA approximate repeats of V-K-V-E-E-P-V-E-E. The span at 802–816 (PVEEVEAEESVQEPV) shows a compositional bias: acidic residues. Basic and acidic residues-rich tracts occupy residues 817-884 (EEVK…SVED) and 946-971 (IKVEEPIKVEEPIKVEEPIKVEEPVK). Low complexity-rich tracts occupy residues 972–985 (VEVASPVVQEQPPQ) and 992–1011 (VVSTSTITIASSPQQSSNSP). Over residues 1016–1031 (VKQPQQQEIEVNSTPI) the composition is skewed to polar residues. Over residues 1032–1050 (KQQQQQQQTPTQQTQTPTK) the composition is skewed to low complexity.

It belongs to the protein kinase superfamily. TKL Ser/Thr protein kinase family.

It carries out the reaction L-seryl-[protein] + ATP = O-phospho-L-seryl-[protein] + ADP + H(+). It catalyses the reaction L-threonyl-[protein] + ATP = O-phospho-L-threonyl-[protein] + ADP + H(+). The protein is Probable serine/threonine-protein kinase kinX (kinX) of Dictyostelium discoideum (Social amoeba).